The sequence spans 495 residues: Probable polyamine transporter At1g31830 (495 aa).

Transmembrane regions (helical) follow at residues 49-69 (VSML…PFGV), 79-99 (LLAL…EALI), 112-132 (GYVV…QGWM), 156-176 (VPAL…TILL), 186-206 (IVGW…AVMG), 230-250 (LYLN…TLAG), 267-287 (VILV…AIPL), 357-377 (TPLL…WLSF), 380-400 (IVAA…IAFV), 417-437 (IGTT…CAVV), and 442-462 (LKVA…HPLL).

Belongs to the amino acid-polyamine-organocation (APC) superfamily. Polyamine:cation symporter (PHS) (TC 2.A.3.12) family.

It is found in the cell membrane. Probable cell membrane polyamine/proton symporter involved in the polyamine uptake in cells. This is Probable polyamine transporter At1g31830 from Arabidopsis thaliana (Mouse-ear cress).